A 341-amino-acid polypeptide reads, in one-letter code: Very-long-chain 3-oxoacyl-CoA reductase (341 aa).

A helical membrane pass occupies residues 22 to 42 (AVTGFLLVGIASFAAPLISTI). NADP(+)-binding residues include Leu-67, Asp-123, Asp-131, Asn-150, Tyr-217, Lys-221, Val-250, and Thr-252. The active-site Proton donor is the Tyr-217. Lys-221 acts as the Lowers pKa of active site Tyr in catalysis.

Belongs to the short-chain dehydrogenases/reductases (SDR) family.

The protein resides in the endoplasmic reticulum membrane. The catalysed reaction is a very-long-chain (3R)-3-hydroxyacyl-CoA + NADP(+) = a very-long-chain 3-oxoacyl-CoA + NADPH + H(+). It participates in lipid metabolism; fatty acid biosynthesis. In terms of biological role, component of the microsomal membrane bound fatty acid elongation system, which produces the 26-carbon very long-chain fatty acids (VLCFA) from palmitate. Catalyzes the reduction of the 3-ketoacyl-CoA intermediate that is formed in each cycle of fatty acid elongation. VLCFAs serve as precursors for ceramide and sphingolipids. This chain is Very-long-chain 3-oxoacyl-CoA reductase, found in Pyrenophora tritici-repentis (strain Pt-1C-BFP) (Wheat tan spot fungus).